The primary structure comprises 423 residues: MLNKAGIAEPSLWTRADAMKVHTDDPTATMPTIDYDFPVMTDKYWVWDTWPLRDINGQVVSFQGWSVIFALVADRTKYGWHNRNDGARIGYFYSRGGSNWIFGGHLLKDGANPRSWEWSGCTIMAPGTANSVEVFFTSVNDTPSESVPAQCKGYIYADDKSVWFDGFDKVTDLFQADGLYYADYAENNFWDFRDPHVFINPEDGKTYALFEGNVAMERGTVAVGEEEIGPVPPKTETPDGARYCAAAIGIAQALNEARTEWKLLPPLVTAFGVNDQTERPHVVFQNGLTYLFTISHHSTYADGLSGPDGVYGFVSENGIFGPYEPLNGSGLVLGNPSSQPYQAYSHYVMTNGLVTSFIDTIPSSDPNVYRYGGTLAPTIKLELVGHRSFVTEVKGYGYIPPQIEWLAEDESSNSAAALSLLNK.

The sucrose site is built by Trp-47, Asp-48, Ser-119, Arg-193, and Asp-194. The active-site Nucleophile is the Asp-48. Catalysis depends on Glu-278, which acts as the Proton donor/acceptor.

It belongs to the glycosyl hydrolase 68 family.

The protein localises to the secreted. It carries out the reaction [6)-beta-D-fructofuranosyl-(2-&gt;](n) alpha-D-glucopyranoside + sucrose = [6)-beta-D-fructofuranosyl-(2-&gt;](n+1) alpha-D-glucopyranoside + D-glucose. Its function is as follows. Catalyzes the synthesis of levan, a fructose polymer, by transferring the fructosyl moiety from sucrose to a growing acceptor molecule. In Zymomonas mobilis subsp. mobilis (strain ATCC 10988 / DSM 424 / LMG 404 / NCIMB 8938 / NRRL B-806 / ZM1), this protein is Levansucrase.